A 326-amino-acid chain; its full sequence is 3-isopropylmalate dehydrogenase (326 aa).

Residues Arg-81, Arg-91, Arg-112, and Asp-198 each contribute to the substrate site. Mg(2+) is bound by residues Asp-198, Asp-222, and Asp-226. 255–267 contacts NAD(+); that stretch reads GAAFDIAGKGIAN.

Belongs to the isocitrate and isopropylmalate dehydrogenases family. Homotetramer. It depends on Mg(2+) as a cofactor. Mn(2+) is required as a cofactor.

The protein localises to the cytoplasm. The catalysed reaction is (2R,3S)-3-isopropylmalate + NAD(+) = 4-methyl-2-oxopentanoate + CO2 + NADH. The protein operates within amino-acid biosynthesis; L-leucine biosynthesis; L-leucine from 3-methyl-2-oxobutanoate: step 3/4. Functionally, catalyzes the oxidation of 3-carboxy-2-hydroxy-4-methylpentanoate (3-isopropylmalate) to 3-carboxy-4-methyl-2-oxopentanoate. The product decarboxylates to 4-methyl-2 oxopentanoate. The protein is 3-isopropylmalate dehydrogenase (leuB) of Archaeoglobus fulgidus (strain ATCC 49558 / DSM 4304 / JCM 9628 / NBRC 100126 / VC-16).